A 198-amino-acid polypeptide reads, in one-letter code: Recombination protein RecR (198 aa).

Residues Cys-57–Cys-72 form a C4-type zinc finger. Residues Thr-80–Ala-175 enclose the Toprim domain.

It belongs to the RecR family.

May play a role in DNA repair. It seems to be involved in an RecBC-independent recombinational process of DNA repair. It may act with RecF and RecO. The polypeptide is Recombination protein RecR (Streptococcus pyogenes serotype M1).